Reading from the N-terminus, the 181-residue chain is Large ribosomal subunit protein uL16 (181 aa).

It belongs to the universal ribosomal protein uL16 family. Part of the 50S ribosomal subunit.

The polypeptide is Large ribosomal subunit protein uL16 (Pyrococcus furiosus (strain ATCC 43587 / DSM 3638 / JCM 8422 / Vc1)).